Consider the following 180-residue polypeptide: DNA replication regulator protein HobA (180 aa).

Residues E17, E27, E140, E143, and N176 each contribute to the Ca(2+) site.

In terms of assembly, forms dimers and homotetramers. Interacts with domains I and II (residues 1-112) of DnaA. In a crystal with domains I and II of DnaA HobA forms tetramers with DnaA fragments bound at the dimer interface of the tetramer. Ca(2+) is required as a cofactor.

Functionally, required for DNA replication initiation. Increases binding of DnaA to oriC region. This chain is DNA replication regulator protein HobA, found in Helicobacter pylori (strain ATCC 700392 / 26695) (Campylobacter pylori).